A 455-amino-acid chain; its full sequence is Rho GTPase-activating protein 3 (455 aa).

Polar residues predominate over residues 1 to 12 (MTNFSRSKSTGT). Positions 1–68 (MTNFSRSKST…HASRSGNGSG (68 aa)) are disordered. The segment covering 24 to 33 (GPDKYENIHN) has biased composition (basic and acidic residues). Residues 43 to 54 (STTSTDYYDAST) are compositionally biased toward low complexity. Residues 55–64 (PLSSHASRSG) are compositionally biased toward polar residues. Residues 105 to 118 (IGWPTEVKHVSHVT) enclose the CRIB domain. Positions 153 to 331 (KSMQCSYDDR…LILMNLKERE (179 aa)) constitute a Rho-GAP domain. Disordered stretches follow at residues 342 to 366 (KQTS…KPNN) and 432 to 455 (FVSN…SLPW). The span at 435 to 446 (NRDEGRKGREAW) shows a compositional bias: basic and acidic residues.

Expressed in differentiating xylem cells.

It localises to the cell membrane. In terms of biological role, acts as a GTPase activator for the Rac-type GTPase by converting it to an inactive GDP-bound state. Involved in secondary wall pattern formation. In association with ROPGEF4, mediates local activation of ARAC10/ROP11 to initiate the distinct pattern of secondary cell walls in xylem cells. This is Rho GTPase-activating protein 3 (ROPGAP3) from Arabidopsis thaliana (Mouse-ear cress).